The following is a 185-amino-acid chain: Elongation factor P (185 aa).

The protein belongs to the elongation factor P family.

It is found in the cytoplasm. Its pathway is protein biosynthesis; polypeptide chain elongation. Functionally, involved in peptide bond synthesis. Stimulates efficient translation and peptide-bond synthesis on native or reconstituted 70S ribosomes in vitro. Probably functions indirectly by altering the affinity of the ribosome for aminoacyl-tRNA, thus increasing their reactivity as acceptors for peptidyl transferase. The polypeptide is Elongation factor P (Streptococcus pyogenes serotype M5 (strain Manfredo)).